Here is a 750-residue protein sequence, read N- to C-terminus: von Willebrand factor A domain-containing protein DDB_G0292188 (750 aa).

A VWFA domain is found at 17–249 (EIKTVFNSDS…IKDDLLLDVV (233 aa)). Low complexity-rich tracts occupy residues 586-595 (SINDNNNSFN) and 603-645 (PFFE…SSAS). Positions 586 to 657 (SINDNNNSFN…PPPSQMLNEQ (72 aa)) are disordered.

In Dictyostelium discoideum (Social amoeba), this protein is von Willebrand factor A domain-containing protein DDB_G0292188.